The following is a 155-amino-acid chain: Interferon gamma (155 aa).

The signal sequence occupies residues 1 to 22; the sequence is MNATHCILALQLFLMAVSGCYC. Asparagine 38 and asparagine 90 each carry an N-linked (GlcNAc...) asparagine glycan.

Belongs to the type II (or gamma) interferon family. Homodimer. Interacts with IFNGR1 (via extracellular domain); this interaction promotes IFNGR1 dimerization. In terms of tissue distribution, released primarily from activated T lymphocytes.

Its subcellular location is the secreted. Its function is as follows. Type II interferon produced by immune cells such as T-cells and NK cells that plays crucial roles in antimicrobial, antiviral, and antitumor responses by activating effector immune cells and enhancing antigen presentation. Primarily signals through the JAK-STAT pathway after interaction with its receptor IFNGR1 to affect gene regulation. Upon IFNG binding, IFNGR1 intracellular domain opens out to allow association of downstream signaling components JAK2, JAK1 and STAT1, leading to STAT1 activation, nuclear translocation and transcription of IFNG-regulated genes. Many of the induced genes are transcription factors such as IRF1 that are able to further drive regulation of a next wave of transcription. Plays a role in class I antigen presentation pathway by inducing a replacement of catalytic proteasome subunits with immunoproteasome subunits. In turn, increases the quantity, quality, and repertoire of peptides for class I MHC loading. Increases the efficiency of peptide generation also by inducing the expression of activator PA28 that associates with the proteasome and alters its proteolytic cleavage preference. Up-regulates as well MHC II complexes on the cell surface by promoting expression of several key molecules such as cathepsins B/CTSB, H/CTSH, and L/CTSL. Participates in the regulation of hematopoietic stem cells during development and under homeostatic conditions by affecting their development, quiescence, and differentiation. The polypeptide is Interferon gamma (Ifng) (Mus musculus (Mouse)).